The primary structure comprises 681 residues: Elongation factor G (681 aa).

A tr-type G domain is found at 5–279 (KNIRNIGIIA…SIVNFLPSPI (275 aa)). GTP is bound by residues 14–21 (AHVDAGKT), 82–86 (DTPGH), and 136–139 (NKLD).

The protein belongs to the TRAFAC class translation factor GTPase superfamily. Classic translation factor GTPase family. EF-G/EF-2 subfamily.

The protein localises to the cytoplasm. Functionally, catalyzes the GTP-dependent ribosomal translocation step during translation elongation. During this step, the ribosome changes from the pre-translocational (PRE) to the post-translocational (POST) state as the newly formed A-site-bound peptidyl-tRNA and P-site-bound deacylated tRNA move to the P and E sites, respectively. Catalyzes the coordinated movement of the two tRNA molecules, the mRNA and conformational changes in the ribosome. In Carsonella ruddii (strain PV), this protein is Elongation factor G.